The chain runs to 200 residues: NADH-quinone oxidoreductase subunit C 1 (200 aa).

It belongs to the complex I 30 kDa subunit family. NDH-1 is composed of 14 different subunits. Subunits NuoB, C, D, E, F, and G constitute the peripheral sector of the complex.

Its subcellular location is the cell inner membrane. It catalyses the reaction a quinone + NADH + 5 H(+)(in) = a quinol + NAD(+) + 4 H(+)(out). NDH-1 shuttles electrons from NADH, via FMN and iron-sulfur (Fe-S) centers, to quinones in the respiratory chain. The immediate electron acceptor for the enzyme in this species is believed to be ubiquinone. Couples the redox reaction to proton translocation (for every two electrons transferred, four hydrogen ions are translocated across the cytoplasmic membrane), and thus conserves the redox energy in a proton gradient. The chain is NADH-quinone oxidoreductase subunit C 1 from Rhizobium etli (strain CIAT 652).